The chain runs to 74 residues: Translation initiation factor IF-1, chloroplastic (74 aa).

An S1-like domain is found at 1-72 (MEKQNIIEME…TKGRITYRLR (72 aa)).

Belongs to the IF-1 family. As to quaternary structure, component of the 30S ribosomal translation pre-initiation complex which assembles on the 30S ribosome in the order IF-2 and IF-3, IF-1 and N-formylmethionyl-tRNA(fMet); mRNA recruitment can occur at any time during PIC assembly.

It localises to the plastid. The protein localises to the chloroplast. Its function is as follows. One of the essential components for the initiation of protein synthesis. Stabilizes the binding of IF-2 and IF-3 on the 30S subunit to which N-formylmethionyl-tRNA(fMet) subsequently binds. Helps modulate mRNA selection, yielding the 30S pre-initiation complex (PIC). Upon addition of the 50S ribosomal subunit IF-1, IF-2 and IF-3 are released leaving the mature 70S translation initiation complex. This is Translation initiation factor IF-1, chloroplastic from Chlorokybus atmophyticus (Soil alga).